Here is a 201-residue protein sequence, read N- to C-terminus: Recombination protein RecR (201 aa).

A C4-type zinc finger spans residues 57-72; that stretch reads CADCRTFTEQDVCNIC. The region spanning 81-176 is the Toprim domain; sequence GQICVVESPA…EASRIAHGVP (96 aa).

Belongs to the RecR family.

In terms of biological role, may play a role in DNA repair. It seems to be involved in an RecBC-independent recombinational process of DNA repair. It may act with RecF and RecO. The sequence is that of Recombination protein RecR from Salmonella agona (strain SL483).